We begin with the raw amino-acid sequence, 144 residues long: Maximins 3/H11 type 1 (144 aa).

The first 18 residues, 1 to 18, serve as a signal peptide directing secretion; the sequence is MNFKYIVAVSFLIASAYA. 2 propeptides span residues 19-43 and 73-122; these read RSVQNDEQSLSQRDVLEEESLREIR and RTAE…KKEK. I143 is subject to Isoleucine amide.

The protein belongs to the bombinin family. Expressed by the skin glands.

It is found in the secreted. In terms of biological role, maximin-3 shows antibacterial activity against both Gram-positive and Gram-negative bacteria. It also shows antimicrobial activity against the fungus C.albicans, but not against A.flavus nor P.uticale. It has little hemolytic activity. It possess a significant cytotoxicity against tumor cell lines. It possess a significant anti-HIV activity. It shows high spermicidal activity. Functionally, maximin-H11 shows antimicrobial activity against bacteria and against the fungus C.albicans. Shows strong hemolytic activity. This chain is Maximins 3/H11 type 1, found in Bombina maxima (Giant fire-bellied toad).